A 181-amino-acid polypeptide reads, in one-letter code: Oligoribonuclease (181 aa).

Residues 8-171 (LIWLDMEMTG…ADILESIEEM (164 aa)) form the Exonuclease domain. Tyr-129 is a catalytic residue.

It belongs to the oligoribonuclease family.

Its subcellular location is the cytoplasm. Functionally, 3'-to-5' exoribonuclease specific for small oligoribonucleotides. The chain is Oligoribonuclease from Chromobacterium violaceum (strain ATCC 12472 / DSM 30191 / JCM 1249 / CCUG 213 / NBRC 12614 / NCIMB 9131 / NCTC 9757 / MK).